The following is a 147-amino-acid chain: Hemoglobin subunit epsilon (147 aa).

Residues 3–147 (HFTAEEKAAV…VAIALAHKYH (145 aa)) form the Globin domain. 2 positions are modified to phosphoserine: S14 and S51. Heme b contacts are provided by H64 and H93.

This sequence belongs to the globin family. Heterotetramer of two alpha chains and two epsilon chains in early embryonic hemoglobin Gower-2; two zeta chains and two epsilon chains in early embryonic hemoglobin Gower-1. As to expression, red blood cells.

Functionally, the epsilon chain is a beta-type chain of early mammalian embryonic hemoglobin. The polypeptide is Hemoglobin subunit epsilon (HBE1) (Pongo pygmaeus (Bornean orangutan)).